Reading from the N-terminus, the 578-residue chain is Serine/threonine-protein kinase D6PKL3 (578 aa).

Residues 1–24 (MDSSSSVVYVGSSSKSRNFQSKSK) are compositionally biased toward low complexity. The disordered stretch occupies residues 1–64 (MDSSSSVVYV…EVIESSVSSV (64 aa)). The span at 25 to 34 (GSITSFSIDS) shows a compositional bias: polar residues. Residues 53-64 (SPEVIESSVSSV) show a composition bias toward low complexity. Residues 182–516 (FKLIKKLGGG…ATEIKQHPFF (335 aa)) form the Protein kinase domain. Residues 188–196 (LGGGDIGNV) and lysine 211 contribute to the ATP site. The Proton acceptor role is filled by aspartate 307. The interval 325–426 (DFDLSLRCAV…VGTHEYLAPE (102 aa)) is activation loop. The PIF motif lies at 575–578 (IDFF).

Belongs to the protein kinase superfamily. AGC Ser/Thr protein kinase family. In terms of tissue distribution, expressed predominantly in root tissue with lower levels found in leaf, stem, seed and flower.

The protein localises to the cell membrane. The enzyme catalyses L-seryl-[protein] + ATP = O-phospho-L-seryl-[protein] + ADP + H(+). It carries out the reaction L-threonyl-[protein] + ATP = O-phospho-L-threonyl-[protein] + ADP + H(+). In terms of biological role, protein kinase that regulates the auxin transport activity of PIN auxin efflux facilitators by direct phosphorylation. D6PK-mediated PIN phosphorylation promotes auxin transport in the hypocotyl and this is a prerequisite for PHOT1-dependent hypocotyl bending. The chain is Serine/threonine-protein kinase D6PKL3 (D6PKL3) from Arabidopsis thaliana (Mouse-ear cress).